We begin with the raw amino-acid sequence, 388 residues long: Probable aspartic-type endopeptidase MCYG_06955 (388 aa).

An N-terminal signal peptide occupies residues 1–21; it reads MMGPFFYFTAYVSLLFAFTQA. N-linked (GlcNAc...) asparagine glycosylation is found at N82 and N104. Residues 96 to 384 form the Peptidase A1 domain; that stretch reads FVNEITVGND…DYDGPKIGFA (289 aa). Residue D112 is part of the active site. N-linked (GlcNAc...) asparagine glycans are attached at residues N209 and N261. D278 is a catalytic residue. 2 N-linked (GlcNAc...) asparagine glycosylation sites follow: N315 and N320.

It belongs to the peptidase A1 family.

It localises to the secreted. Its function is as follows. Probable aspartic-type endopeptidase which contributes to virulence. This Arthroderma otae (strain ATCC MYA-4605 / CBS 113480) (Microsporum canis) protein is Probable aspartic-type endopeptidase MCYG_06955.